Reading from the N-terminus, the 1522-residue chain is Lysophospholipase NTE1 (1522 aa).

Over 1 to 73 (MVDGTYVNSS…SLLVYLINGT (73 aa)) the chain is Lumenal. Residues 74-94 (VPFYLVVLGSVFTPIIVYLIL) traverse the membrane as a helical segment. The Cytoplasmic portion of the chain corresponds to 95 to 1522 (RSRVLSAYSR…IHLLHRRNSI (1428 aa)). 3 disordered regions span residues 443–468 (SVQE…TPNK), 485–523 (DLLS…ASSP), and 535–556 (SQNF…PSVV). 2 stretches are compositionally biased toward low complexity: residues 498–511 (KTAS…PRIS) and 540–555 (PLSS…KPSV). A nucleoside 3',5'-cyclic phosphate-binding positions include 661-782 (PINV…LTKL) and 778-918 (TLTK…VAHK). Disordered regions lie at residues 828–852 (QKSK…DNQP) and 1125–1145 (SSQN…GAPP). Residues 1219-1383 (LVLGGGGARG…LDNLPVLEMK (165 aa)) enclose the PNPLA domain. The GXGXXG motif lies at 1223-1228 (GGGARG). The GXSXG signature appears at 1250 to 1254 (GTSIG). Ser1252 acts as the Nucleophile in catalysis. Asp1370 serves as the catalytic Proton acceptor. The short motif at 1370 to 1372 (DGG) is the DGA/G element.

It belongs to the NTE family.

It localises to the endoplasmic reticulum membrane. It catalyses the reaction a 1-acyl-sn-glycero-3-phosphocholine + H2O = sn-glycerol 3-phosphocholine + a fatty acid + H(+). With respect to regulation, inhibited by organophosphorus esters. Intracellular phospholipase B that catalyzes the double deacylation of phosphatidylcholine (PC) to glycerophosphocholine (GroPCho). Plays an important role in membrane lipid homeostasis. Responsible for the rapid PC turnover in response to inositol, elevated temperatures, or when choline is present in the growth medium. The protein is Lysophospholipase NTE1 (NTE1) of Eremothecium gossypii (strain ATCC 10895 / CBS 109.51 / FGSC 9923 / NRRL Y-1056) (Yeast).